The following is a 117-amino-acid chain: Immunoglobulin heavy variable 1-46 (117 aa).

The signal sequence occupies residues 1 to 19; that stretch reads MDWTWRVFCLLAVAPGAHS. The interval 20–44 is framework-1; that stretch reads QVQLVQSGAEVKKPGASVKVSCKAS. Positions 20–117 constitute an Ig-like domain; it reads QVQLVQSGAE…EDTAVYYCAR (98 aa). Cys-41 and Cys-115 are joined by a disulfide. The interval 45-52 is complementarity-determining-1; it reads GYTFTSYY. A framework-2 region spans residues 53–69; the sequence is MHWVRQAPGQGLEWMGI. The tract at residues 70 to 77 is complementarity-determining-2; it reads INPSGGST. The segment at 78–115 is framework-3; sequence SYAQKFQGRVTMTRDTSTSTVYMELSSLRSEDTAVYYC. The interval 116 to 117 is complementarity-determining-3; it reads AR.

In terms of assembly, immunoglobulins are composed of two identical heavy chains and two identical light chains; disulfide-linked.

Its subcellular location is the secreted. The protein localises to the cell membrane. V region of the variable domain of immunoglobulin heavy chains that participates in the antigen recognition. Immunoglobulins, also known as antibodies, are membrane-bound or secreted glycoproteins produced by B lymphocytes. In the recognition phase of humoral immunity, the membrane-bound immunoglobulins serve as receptors which, upon binding of a specific antigen, trigger the clonal expansion and differentiation of B lymphocytes into immunoglobulins-secreting plasma cells. Secreted immunoglobulins mediate the effector phase of humoral immunity, which results in the elimination of bound antigens. The antigen binding site is formed by the variable domain of one heavy chain, together with that of its associated light chain. Thus, each immunoglobulin has two antigen binding sites with remarkable affinity for a particular antigen. The variable domains are assembled by a process called V-(D)-J rearrangement and can then be subjected to somatic hypermutations which, after exposure to antigen and selection, allow affinity maturation for a particular antigen. This Homo sapiens (Human) protein is Immunoglobulin heavy variable 1-46.